The sequence spans 475 residues: Adenosylhomocysteinase (475 aa).

Positions 66, 141, and 201 each coordinate substrate. 202 to 204 provides a ligand contact to NAD(+); the sequence is TTT. Substrate-binding residues include Lys231 and Asp235. NAD(+)-binding positions include Asn236, 265–270, Glu288, Asn323, 344–346, and Asn389; these read GYGEVG and IGH.

It belongs to the adenosylhomocysteinase family. It depends on NAD(+) as a cofactor.

The protein localises to the cytoplasm. It carries out the reaction S-adenosyl-L-homocysteine + H2O = L-homocysteine + adenosine. The protein operates within amino-acid biosynthesis; L-homocysteine biosynthesis; L-homocysteine from S-adenosyl-L-homocysteine: step 1/1. Functionally, may play a key role in the regulation of the intracellular concentration of adenosylhomocysteine. This chain is Adenosylhomocysteinase, found in Geobacter sulfurreducens (strain ATCC 51573 / DSM 12127 / PCA).